The following is a 415-amino-acid chain: Arrestin red cell isoform 3 (415 aa).

It belongs to the arrestin family.

It is found in the cytoplasm. In Oncorhynchus mykiss (Rainbow trout), this protein is Arrestin red cell isoform 3.